Reading from the N-terminus, the 140-residue chain is Large ribosomal subunit protein bL17 (140 aa).

Belongs to the bacterial ribosomal protein bL17 family. Part of the 50S ribosomal subunit. Contacts protein L32.

This Rhizobium johnstonii (strain DSM 114642 / LMG 32736 / 3841) (Rhizobium leguminosarum bv. viciae) protein is Large ribosomal subunit protein bL17.